A 364-amino-acid chain; its full sequence is Putative galactoside 2-alpha-L-fucosyltransferase svh-11 (364 aa).

The Cytoplasmic portion of the chain corresponds to Met1–Cys19. The chain crosses the membrane as a helical; Signal-anchor for type II membrane protein span at residues Leu20–Phe42. Topologically, residues Lys43–Ser364 are lumenal. Asn60 and Asn128 each carry an N-linked (GlcNAc...) asparagine glycan.

This sequence belongs to the glycosyltransferase 11 family.

It is found in the golgi apparatus. The protein resides in the golgi stack membrane. In terms of biological role, mediates the transfer of fucose to the terminal galactose on glycan chains of cell surface glycoproteins and glycolipids. Required for axon regeneration after injury. The polypeptide is Putative galactoside 2-alpha-L-fucosyltransferase svh-11 (Caenorhabditis elegans).